A 273-amino-acid polypeptide reads, in one-letter code: Ribosomal RNA small subunit methyltransferase A (273 aa).

S-adenosyl-L-methionine is bound by residues Asn-19, Leu-21, Gly-46, Glu-67, Asp-92, and Asn-113.

It belongs to the class I-like SAM-binding methyltransferase superfamily. rRNA adenine N(6)-methyltransferase family. RsmA subfamily.

The protein resides in the cytoplasm. The enzyme catalyses adenosine(1518)/adenosine(1519) in 16S rRNA + 4 S-adenosyl-L-methionine = N(6)-dimethyladenosine(1518)/N(6)-dimethyladenosine(1519) in 16S rRNA + 4 S-adenosyl-L-homocysteine + 4 H(+). In terms of biological role, specifically dimethylates two adjacent adenosines (A1518 and A1519) in the loop of a conserved hairpin near the 3'-end of 16S rRNA in the 30S particle. May play a critical role in biogenesis of 30S subunits. This chain is Ribosomal RNA small subunit methyltransferase A, found in Hahella chejuensis (strain KCTC 2396).